The chain runs to 88 residues: MAPKKKWSKGKVKDKAQHATVFDKSIIDRINKEVPAFKFISVSVLVDRMKINGSLARIAIRDLAERGVIQKVDQHSKQAIYTRAAASA.

This sequence belongs to the eukaryotic ribosomal protein eS25 family. In terms of assembly, component of the small ribosomal subunit (SSU). Mature yeast ribosomes consist of a small (40S) and a large (60S) subunit. The 40S small subunit contains 1 molecule of ribosomal RNA (18S rRNA) and at least 33 different proteins. The large 60S subunit contains 3 rRNA molecules (25S, 5.8S and 5S rRNA) and at least 46 different proteins.

Its subcellular location is the cytoplasm. Functionally, component of the ribosome, a large ribonucleoprotein complex responsible for the synthesis of proteins in the cell. The small ribosomal subunit (SSU) binds messenger RNAs (mRNAs) and translates the encoded message by selecting cognate aminoacyl-transfer RNA (tRNA) molecules. The large subunit (LSU) contains the ribosomal catalytic site termed the peptidyl transferase center (PTC), which catalyzes the formation of peptide bonds, thereby polymerizing the amino acids delivered by tRNAs into a polypeptide chain. The nascent polypeptides leave the ribosome through a tunnel in the LSU and interact with protein factors that function in enzymatic processing, targeting, and the membrane insertion of nascent chains at the exit of the ribosomal tunnel. This is Small ribosomal subunit protein eS25B (rps2501) from Schizosaccharomyces pombe (strain 972 / ATCC 24843) (Fission yeast).